A 186-amino-acid polypeptide reads, in one-letter code: Transposon Tn501 resolvase (186 aa).

Residues 4 to 137 (HRIGYVRVSS…EGITLAKQRG (134 aa)) enclose the Resolvase/invertase-type recombinase catalytic domain. Serine 12 serves as the catalytic O-(5'-phospho-DNA)-serine intermediate. The interval 17–38 (NPERQLEQTQVSKVFTDKASGK) is disordered. Residues 164 to 183 (KAQLAREFNISRETLYQYLR) constitute a DNA-binding region (H-T-H motif).

Belongs to the site-specific recombinase resolvase family.

In terms of biological role, resolvase catalyzes the resolution (a site-specific recombination) of the cointegrated replicon to yield the final transposition products. The chain is Transposon Tn501 resolvase (tnpR) from Pseudomonas aeruginosa.